Consider the following 550-residue polypeptide: DNA mismatch repair protein MutL (550 aa).

This sequence belongs to the DNA mismatch repair MutL/HexB family.

In terms of biological role, this protein is involved in the repair of mismatches in DNA. It is required for dam-dependent methyl-directed DNA mismatch repair. May act as a 'molecular matchmaker', a protein that promotes the formation of a stable complex between two or more DNA-binding proteins in an ATP-dependent manner without itself being part of a final effector complex. The polypeptide is DNA mismatch repair protein MutL (Microcystis aeruginosa (strain NIES-843 / IAM M-2473)).